The sequence spans 403 residues: Tyrosine--tRNA ligase (403 aa).

Positions 45–54 match the 'HIGH' region motif; sequence PTAPDLHLGH. Positions 229-233 match the 'KMSKS' region motif; the sequence is KMSKS. An ATP-binding site is contributed by lysine 232. The 62-residue stretch at 341–402 folds into the S4 RNA-binding domain; the sequence is VALCRLLAEA…GKRRFARITF (62 aa).

This sequence belongs to the class-I aminoacyl-tRNA synthetase family. TyrS type 2 subfamily. Homodimer.

The protein resides in the cytoplasm. The catalysed reaction is tRNA(Tyr) + L-tyrosine + ATP = L-tyrosyl-tRNA(Tyr) + AMP + diphosphate + H(+). Its function is as follows. Catalyzes the attachment of tyrosine to tRNA(Tyr) in a two-step reaction: tyrosine is first activated by ATP to form Tyr-AMP and then transferred to the acceptor end of tRNA(Tyr). This Geobacter sulfurreducens (strain ATCC 51573 / DSM 12127 / PCA) protein is Tyrosine--tRNA ligase.